Consider the following 265-residue polypeptide: Serine protease ami (265 aa).

The first 21 residues, 1 to 21 (MNVSWALLAVVLVLTVATYEC), serve as a signal peptide directing secretion. Residue N2 is glycosylated (N-linked (GlcNAc...) asparagine). Residues 22 to 26 (RPRGR) constitute a propeptide, activation peptide. The Peptidase S1 domain occupies 27–254 (ILGGQDSKAE…YKSWIMESMY (228 aa)). A disulfide bond links C52 and C68. The Charge relay system role is filled by H67. N71, N74, and N108 each carry an N-linked (GlcNAc...) asparagine glycan. The active-site Charge relay system is D115. 3 disulfide bridges follow: C149–C215, C180–C196, and C205–C230. The active-site Charge relay system is S209. N255 carries N-linked (GlcNAc...) asparagine glycosylation.

It belongs to the peptidase S1 family.

It localises to the secreted. Its function is as follows. Probable serine protease. The protein is Serine protease ami of Xenopus tropicalis (Western clawed frog).